A 298-amino-acid polypeptide reads, in one-letter code: MYFLILFSSNAELGEVLRTMRSVEDRFNKRFHYPWTFYGMDEFTEYFMSTTSTIASGHCEYGTKGITYTNHLQFILTISYLVHWDLSQVKPLVENNRLYQQRADALAQENLSYVYSPLFHSFQDWVVRSLLYHPQLEYDYVWRIEPGLKLVCEEKKDIFSTFKDSDIVFTNHVCERKHSGIYAMEEAIEEYKILNTQGDFSNIWVYSNNYTYCKYWPFNEILSLKQIRHNQTYTNLINYLLGSGGTYYHRWTESDILSAAFGVLRARANHMESVGFFLNDDVHYCPETIPYTGRCACL.

Glutamate 220 acts as the Nucleophile in catalysis.

It belongs to the glycosyltransferase 15 family.

The protein resides in the cytoplasm. Its subcellular location is the nucleus. In terms of biological role, probable mannosyltransferase involved in O-glycosylation of cell wall and secreted proteins. This chain is O-glycoside alpha-1,2-mannosyltransferase homolog 6 (omh6), found in Schizosaccharomyces pombe (strain 972 / ATCC 24843) (Fission yeast).